The chain runs to 319 residues: GTPase Era (319 aa).

The region spanning 9 to 196 (RSGVSLIIGR…MRTLRDLLPE (188 aa)) is the Era-type G domain. The interval 17–24 (GRPSSGKS) is G1. GTP is bound at residue 17-24 (GRPSSGKS). The tract at residues 43–47 (QTTRN) is G2. The segment at 64 to 67 (DTPG) is G3. Residues 64-68 (DTPGY) and 127-130 (NKVD) contribute to the GTP site. The segment at 127 to 130 (NKVD) is G4. The interval 175-177 (ISA) is G5. Positions 227 to 303 (CRDELPHALY…HISLDIRVKV (77 aa)) constitute a KH type-2 domain.

Belongs to the TRAFAC class TrmE-Era-EngA-EngB-Septin-like GTPase superfamily. Era GTPase family. As to quaternary structure, monomer.

Its subcellular location is the cytoplasm. It is found in the cell inner membrane. Its function is as follows. An essential GTPase that binds both GDP and GTP, with rapid nucleotide exchange. Plays a role in 16S rRNA processing and 30S ribosomal subunit biogenesis and possibly also in cell cycle regulation and energy metabolism. In Treponema pallidum (strain Nichols), this protein is GTPase Era.